The primary structure comprises 176 residues: Large ribosomal subunit protein uL10 (176 aa).

Belongs to the universal ribosomal protein uL10 family. As to quaternary structure, part of the ribosomal stalk of the 50S ribosomal subunit. The N-terminus interacts with L11 and the large rRNA to form the base of the stalk. The C-terminus forms an elongated spine to which L12 dimers bind in a sequential fashion forming a multimeric L10(L12)X complex.

In terms of biological role, forms part of the ribosomal stalk, playing a central role in the interaction of the ribosome with GTP-bound translation factors. The chain is Large ribosomal subunit protein uL10 from Teredinibacter turnerae (strain ATCC 39867 / T7901).